A 128-amino-acid chain; its full sequence is uncharacterized protein (128 aa).

This is an uncharacterized protein from Enterobacteria phage T4 (Bacteriophage T4).